A 49-amino-acid polypeptide reads, in one-letter code: uncharacterized protein (49 aa).

This is an uncharacterized protein from Sulfolobus spindle-shape virus 1 (SSV1).